The following is a 205-amino-acid chain: Isochorismatase domain-containing protein 2 (205 aa).

It belongs to the isochorismatase family. In terms of assembly, interacts with CDKN2A.

It is found in the cytoplasm. The protein resides in the nucleus. In Macaca fascicularis (Crab-eating macaque), this protein is Isochorismatase domain-containing protein 2 (ISOC2).